A 150-amino-acid polypeptide reads, in one-letter code: Small ribosomal subunit protein uS7cz/uS7cy (150 aa).

Belongs to the universal ribosomal protein uS7 family. As to quaternary structure, part of the 30S ribosomal subunit.

The protein resides in the plastid. It localises to the chloroplast. One of the primary rRNA binding proteins, it binds directly to 16S rRNA where it nucleates assembly of the head domain of the 30S subunit. The protein is Small ribosomal subunit protein uS7cz/uS7cy (rps7-A) of Adiantum capillus-veneris (Maidenhair fern).